We begin with the raw amino-acid sequence, 333 residues long: Probable xyloglucan endotransglucosylase/hydrolase protein 27 (333 aa).

A signal peptide spans 1 to 20 (METLSRLLVFMSLFSGLVSG). Residues 21-223 (FALQNLPITS…YKYAPYIARF (203 aa)) form the GH16 domain. The active-site Nucleophile is the Glu108. Glu112 (proton donor) is an active-site residue. Residues Glu112 and 125-127 (QTN) each bind xyloglucan. Asn131 carries N-linked (GlcNAc...) asparagine glycosylation. Xyloglucan-binding positions include 135–139 (HSGRE), 202–203 (KW), Gly207, and Arg282. A disulfide bridge links Cys277 with Cys290. Residues 311-333 (IPRRHRNGKHRSKRSRVDGTESI) form a disordered region. Positions 312–324 (PRRHRNGKHRSKR) are enriched in basic residues.

It belongs to the glycosyl hydrolase 16 family. XTH group 3 subfamily. Post-translationally, contains at least one intrachain disulfide bond essential for its enzymatic activity. Expressed in 7 day old seedlings, roots, hypocotyls, rosette leaves, internodes between nodes bearing axillary shoots, nodes bearing flowers, flower buds, anthers and siliques.

It is found in the secreted. Its subcellular location is the cell wall. The protein localises to the extracellular space. The protein resides in the apoplast. The catalysed reaction is breaks a beta-(1-&gt;4) bond in the backbone of a xyloglucan and transfers the xyloglucanyl segment on to O-4 of the non-reducing terminal glucose residue of an acceptor, which can be a xyloglucan or an oligosaccharide of xyloglucan.. Its function is as follows. Catalyzes xyloglucan endohydrolysis (XEH) and/or endotransglycosylation (XET). Cleaves and religates xyloglucan polymers, an essential constituent of the primary cell wall, and thereby participates in cell wall construction of growing tissues. Required for cell wall modification during the development of tracheary elements. This is Probable xyloglucan endotransglucosylase/hydrolase protein 27 (XTH27) from Arabidopsis thaliana (Mouse-ear cress).